Consider the following 200-residue polypeptide: Nucleoside triphosphate pyrophosphatase (200 aa).

D79 acts as the Proton acceptor in catalysis.

This sequence belongs to the Maf family. It depends on a divalent metal cation as a cofactor.

The protein resides in the cytoplasm. It carries out the reaction a ribonucleoside 5'-triphosphate + H2O = a ribonucleoside 5'-phosphate + diphosphate + H(+). The catalysed reaction is a 2'-deoxyribonucleoside 5'-triphosphate + H2O = a 2'-deoxyribonucleoside 5'-phosphate + diphosphate + H(+). Nucleoside triphosphate pyrophosphatase. May have a dual role in cell division arrest and in preventing the incorporation of modified nucleotides into cellular nucleic acids. This Legionella pneumophila subsp. pneumophila (strain Philadelphia 1 / ATCC 33152 / DSM 7513) protein is Nucleoside triphosphate pyrophosphatase.